A 334-amino-acid chain; its full sequence is Mucin-15 (334 aa).

Positions 1–23 (MLALAKILLISTLFYSLLSGSHG) are cleaved as a signal peptide. Over 24-236 (KENQDINTTQ…SDPQKENRNT (213 aa)) the chain is Extracellular. N-linked (GlcNAc...) asparagine glycosylation is found at Asn30, Asn61, Asn79, Asn90, Asn148, Asn155, Asn163, Asn218, and Asn225. Residues 64–104 (TSNLKASHSPPLNLPNNSHGITDFSSNSSAEHSLGSLKPTS) form a disordered region. Residues 77–94 (LPNNSHGITDFSSNSSAE) are compositionally biased toward polar residues. Residues 237–257 (GIVFGAILGAILGVSLLTLVG) traverse the membrane as a helical segment. The Cytoplasmic segment spans residues 258 to 334 (YLLCGKRKTD…DDIPPLRTSV (77 aa)). Positions 304 to 334 (PTLNDSAMPESEENARDGIPMDDIPPLRTSV) are disordered.

Post-translationally, highly glycosylated (N- and O-linked carbohydrates). Expressed in spleen, thymus, prostate, testis, ovary, small intestine, colon, peripheral blood leukocyte, bone marrow, lymph node and lung.

It is found in the cell membrane. It localises to the secreted. May play a role in the cell adhesion to the extracellular matrix. This Homo sapiens (Human) protein is Mucin-15 (MUC15).